The sequence spans 197 residues: ATP synthase subunit delta (197 aa).

This sequence belongs to the ATPase delta chain family. F-type ATPases have 2 components, F(1) - the catalytic core - and F(0) - the membrane proton channel. F(1) has five subunits: alpha(3), beta(3), gamma(1), delta(1), epsilon(1). F(0) has three main subunits: a(1), b(2) and c(10-14). The alpha and beta chains form an alternating ring which encloses part of the gamma chain. F(1) is attached to F(0) by a central stalk formed by the gamma and epsilon chains, while a peripheral stalk is formed by the delta and b chains.

Its subcellular location is the cell inner membrane. Its function is as follows. F(1)F(0) ATP synthase produces ATP from ADP in the presence of a proton or sodium gradient. F-type ATPases consist of two structural domains, F(1) containing the extramembraneous catalytic core and F(0) containing the membrane proton channel, linked together by a central stalk and a peripheral stalk. During catalysis, ATP synthesis in the catalytic domain of F(1) is coupled via a rotary mechanism of the central stalk subunits to proton translocation. Functionally, this protein is part of the stalk that links CF(0) to CF(1). It either transmits conformational changes from CF(0) to CF(1) or is implicated in proton conduction. This is ATP synthase subunit delta from Bartonella henselae (strain ATCC 49882 / DSM 28221 / CCUG 30454 / Houston 1) (Rochalimaea henselae).